We begin with the raw amino-acid sequence, 554 residues long: Membrane protein insertase YidC (554 aa).

5 consecutive transmembrane segments (helical) span residues 7–24 (VLWV…DNWQ), 362–382 (VVGN…AVFF), 436–456 (LPVV…LASV), 475–495 (PFFI…SLNP), and 510–530 (PIAF…YYVV).

It belongs to the OXA1/ALB3/YidC family. Type 1 subfamily. Interacts with the Sec translocase complex via SecD. Specifically interacts with transmembrane segments of nascent integral membrane proteins during membrane integration.

It localises to the cell inner membrane. Functionally, required for the insertion and/or proper folding and/or complex formation of integral membrane proteins into the membrane. Involved in integration of membrane proteins that insert both dependently and independently of the Sec translocase complex, as well as at least some lipoproteins. Aids folding of multispanning membrane proteins. The polypeptide is Membrane protein insertase YidC (Burkholderia vietnamiensis (strain G4 / LMG 22486) (Burkholderia cepacia (strain R1808))).